Here is a 965-residue protein sequence, read N- to C-terminus: Villin-3 (965 aa).

Gelsolin-like repeat units follow at residues 27 to 79 (ENFE…DEAG), 150 to 190 (VHLK…QERA), 262 to 304 (GQVE…EERK), 401 to 452 (ANSK…EDQE), 533 to 573 (NKAL…EQQE), and 635 to 676 (FQVE…KEKQ). Low complexity-rich tracts occupy residues 769 to 780 (AFNSSSGRTSSP) and 808 to 828 (SSPSSKSPPRRSGLTSQASQR). Disordered stretches follow at residues 769–828 (AFNS…ASQR) and 840–906 (TAEK…GVTF). The segment covering 865 to 879 (EATEEATEAKEEEEV) has biased composition (acidic residues). Serine 880 carries the post-translational modification Phosphoserine. The region spanning 900 to 965 (ETTGVTFTYE…DLLKKKFNLF (66 aa)) is the HP domain.

It belongs to the villin/gelsolin family. Expressed in all tissues examined, including root hairs.

It is found in the cytoplasm. It localises to the cytoskeleton. Functionally, binds actin and actin filament bundles in a Ca(2+)-insensitive manner, but severs actin filaments in a calcium-dependent manner, regardless of the presence or not of VLN1 (AC O81643). Acts redundantly with VLN2 (AC O81644) to generate thick actin filament bundles, to regulate directional organ growth and in sclerenchyma development. The protein is Villin-3 of Arabidopsis thaliana (Mouse-ear cress).